The primary structure comprises 204 residues: WW domain-containing protein C11B10.08 (204 aa).

One can recognise a WW domain in the interval 7 to 43; that stretch reads EGLPNGWVAQWDERYKCYFYVNESDPKAKPQWECPVR. The disordered stretch occupies residues 32–117; the sequence is PKAKPQWECP…GYPQQPYYYP (86 aa). Composition is skewed to low complexity over residues 66–100 and 108–117; these read YSNS…GAAP and GYPQQPYYYP.

It is found in the cytoplasm. The protein resides in the nucleus. The sequence is that of WW domain-containing protein C11B10.08 from Schizosaccharomyces pombe (strain 972 / ATCC 24843) (Fission yeast).